The following is a 775-amino-acid chain: Meiotic driver SPOK2 (775 aa).

Positions Lys4 to Glu69 form a coiled coil. Disordered regions lie at residues Lys18–Glu51, Gln211–Ser249, Leu442–Asp525, and Pro734–Phe761. Residues Ser444–Thr457 are compositionally biased toward polar residues.

The protein localises to the cytoplasm. Its subcellular location is the nucleus. Its function is as follows. Promotes unequal transmission of alleles from the parental zygote to progeny spores by acting as poison/antidote system, leading to poisoning of progeny that do not inherit the allele. May possess DNA nuclease activity that leads to spore killing, and a kinase activity that confers resistance to the nuclease activity. The sequence is that of Meiotic driver SPOK2 from Podospora anserina (strain S / ATCC MYA-4624 / DSM 980 / FGSC 10383) (Pleurage anserina).